Here is a 572-residue protein sequence, read N- to C-terminus: Probable pyruvate decarboxylase C186.09 (572 aa).

Substrate contacts are provided by aspartate 38 and histidine 125. Positions 400-482 (DSWFGGMRIT…FLINNRGYTI (83 aa)) are thiamine pyrophosphate binding. Mg(2+) contacts are provided by aspartate 450, asparagine 477, and glycine 479. Glutamate 483 contributes to the substrate binding site.

This sequence belongs to the TPP enzyme family. Homotetramer. The cofactor is a metal cation. Thiamine diphosphate serves as cofactor.

It carries out the reaction a 2-oxocarboxylate + H(+) = an aldehyde + CO2. This chain is Probable pyruvate decarboxylase C186.09, found in Schizosaccharomyces pombe (strain 972 / ATCC 24843) (Fission yeast).